The sequence spans 521 residues: Glucose-1-phosphate adenylyltransferase large subunit 3, chloroplastic (521 aa).

A chloroplast-targeting transit peptide spans 1 to 61 (MDSCCNFSLG…RKLRPGVAYA (61 aa)).

It belongs to the bacterial/plant glucose-1-phosphate adenylyltransferase family. In terms of assembly, heterotetramer. In terms of tissue distribution, probably are expressed in roots, flowers and/or seeds.

The protein localises to the plastid. It localises to the chloroplast. The enzyme catalyses alpha-D-glucose 1-phosphate + ATP + H(+) = ADP-alpha-D-glucose + diphosphate. Its pathway is glycan biosynthesis; starch biosynthesis. With respect to regulation, activated by 3'phosphoglycerate, inhibited by orthophosphate. Allosteric regulation. Its function is as follows. This protein plays a role in synthesis of starch. It catalyzes the synthesis of the activated glycosyl donor, ADP-glucose from Glc-1-P and ATP. The chain is Glucose-1-phosphate adenylyltransferase large subunit 3, chloroplastic (APL3) from Arabidopsis thaliana (Mouse-ear cress).